A 159-amino-acid polypeptide reads, in one-letter code: Ubiquitin-like protein ATG12 (159 aa).

The segment at 1-40 (MASPQPPFGGGSNSNSNTASPSNNLSPTASPLLEGRDSPN) is disordered. Over residues 13-27 (NSNSNTASPSNNLSP) the composition is skewed to low complexity. A Glycyl lysine isopeptide (Gly-Lys) (interchain with K-218 in ATG5) cross-link involves residue G159.

This sequence belongs to the ATG12 family. As to quaternary structure, forms a conjugate with ATG5. Forms a thioester bond with the 'Cys-116' of ATG10. Interacts with the ATG7 C-terminal 40 amino acids domain. The ATG12-ATG5 conjugate forms a complex with several units of ATG16. The ATG12-ATG5 conjugate also associates with ATG3.

The protein resides in the preautophagosomal structure membrane. It is found in the cytoplasm. Its function is as follows. Ubiquitin-like protein involved in cytoplasm to vacuole transport (Cvt), autophagy vesicles formation, mitophagy, and nucleophagy. Conjugation with ATG5 through a ubiquitin-like conjugating system involving also ATG7 as an E1-like activating enzyme and ATG10 as an E2-like conjugating enzyme, is essential for its function. The ATG12-ATG5 conjugate acts as an E3-like enzyme which is required for lipidation of ATG8 and ATG8 association to the vesicle membranes. ATG12-ATG5 rearranges the ATG3 catalytic center and enhances its E2 activity. Plays a role in sexual development and perithecia formation. This Sordaria macrospora (strain ATCC MYA-333 / DSM 997 / K(L3346) / K-hell) protein is Ubiquitin-like protein ATG12.